A 346-amino-acid polypeptide reads, in one-letter code: D-alanine--D-alanine ligase (346 aa).

The ATP-grasp domain occupies 133–326 (KFLAQKAGVK…LANSLPKERE (194 aa)). 159–209 (YPIILKPARLGSSIGVSVVHDDSELAYAKDVAFEFDKDVLVEPFIKGVKEY) provides a ligand contact to ATP. Positions 282, 294, and 296 each coordinate Mg(2+).

It belongs to the D-alanine--D-alanine ligase family. It depends on Mg(2+) as a cofactor. Requires Mn(2+) as cofactor.

It is found in the cytoplasm. It carries out the reaction 2 D-alanine + ATP = D-alanyl-D-alanine + ADP + phosphate + H(+). It functions in the pathway cell wall biogenesis; peptidoglycan biosynthesis. Its function is as follows. Cell wall formation. The protein is D-alanine--D-alanine ligase of Campylobacter concisus (strain 13826).